The primary structure comprises 353 residues: Photosystem II protein D1 (353 aa).

Threonine 2 carries the post-translational modification N-acetylthreonine. A Phosphothreonine modification is found at threonine 2. A run of 3 helical transmembrane segments spans residues 29-46, 118-133, and 142-156; these read YIGW…TATS, HFLL…EWEL, and WIAV…AATA. Histidine 118 is a chlorophyll a binding site. Tyrosine 126 is a pheophytin a binding site. [CaMn4O5] cluster contacts are provided by aspartate 170 and glutamate 189. A helical transmembrane segment spans residues 197–218; sequence FHMLGVAGVFGGSLFSAMHGSL. Histidine 198 is a chlorophyll a binding site. A quinone contacts are provided by residues histidine 215 and 264 to 265; that span reads SF. Histidine 215 contacts Fe cation. Histidine 272 is a Fe cation binding site. Residues 274-288 form a helical membrane-spanning segment; that stretch reads FLAAWPVVGIWFTAL. [CaMn4O5] cluster-binding residues include histidine 332, glutamate 333, aspartate 342, and alanine 344. A propeptide spanning residues 345–353 is cleaved from the precursor; that stretch reads SVELDSIDG.

This sequence belongs to the reaction center PufL/M/PsbA/D family. As to quaternary structure, PSII is composed of 1 copy each of membrane proteins PsbA, PsbB, PsbC, PsbD, PsbE, PsbF, PsbH, PsbI, PsbJ, PsbK, PsbL, PsbM, PsbT, PsbX, PsbY, PsbZ, Psb30/Ycf12, at least 3 peripheral proteins of the oxygen-evolving complex and a large number of cofactors. It forms dimeric complexes. Requires The D1/D2 heterodimer binds P680, chlorophylls that are the primary electron donor of PSII, and subsequent electron acceptors. It shares a non-heme iron and each subunit binds pheophytin, quinone, additional chlorophylls, carotenoids and lipids. D1 provides most of the ligands for the Mn4-Ca-O5 cluster of the oxygen-evolving complex (OEC). There is also a Cl(-1) ion associated with D1 and D2, which is required for oxygen evolution. The PSII complex binds additional chlorophylls, carotenoids and specific lipids. as cofactor. Tyr-161 forms a radical intermediate that is referred to as redox-active TyrZ, YZ or Y-Z. In terms of processing, C-terminally processed by CTPA; processing is essential to allow assembly of the oxygen-evolving complex and thus photosynthetic growth.

The protein localises to the plastid. Its subcellular location is the chloroplast thylakoid membrane. The enzyme catalyses 2 a plastoquinone + 4 hnu + 2 H2O = 2 a plastoquinol + O2. Functionally, photosystem II (PSII) is a light-driven water:plastoquinone oxidoreductase that uses light energy to abstract electrons from H(2)O, generating O(2) and a proton gradient subsequently used for ATP formation. It consists of a core antenna complex that captures photons, and an electron transfer chain that converts photonic excitation into a charge separation. The D1/D2 (PsbA/PsbD) reaction center heterodimer binds P680, the primary electron donor of PSII as well as several subsequent electron acceptors. This Gnetum parvifolium (Small-leaved jointfir) protein is Photosystem II protein D1.